Reading from the N-terminus, the 154-residue chain is Myoglobin (154 aa).

In terms of domain architecture, Globin spans 2-148 (VLSEGEWQLV…FRKDIAAKYK (147 aa)). A Phosphoserine modification is found at Ser-4. Nitrite is bound at residue His-65. His-65 contributes to the O2 binding site. Thr-68 is modified (phosphothreonine). His-94 contacts heme b.

The protein belongs to the globin family. As to quaternary structure, monomeric.

It localises to the cytoplasm. It is found in the sarcoplasm. The enzyme catalyses Fe(III)-heme b-[protein] + nitric oxide + H2O = Fe(II)-heme b-[protein] + nitrite + 2 H(+). The catalysed reaction is H2O2 + AH2 = A + 2 H2O. Functionally, monomeric heme protein which primary function is to store oxygen and facilitate its diffusion within muscle tissues. Reversibly binds oxygen through a pentacoordinated heme iron and enables its timely and efficient release as needed during periods of heightened demand. Depending on the oxidative conditions of tissues and cells, and in addition to its ability to bind oxygen, it also has a nitrite reductase activity whereby it regulates the production of bioactive nitric oxide. Under stress conditions, like hypoxia and anoxia, it also protects cells against reactive oxygen species thanks to its pseudoperoxidase activity. In Kogia breviceps (Pygmy sperm whale), this protein is Myoglobin (MB).